The sequence spans 112 residues: T cell receptor alpha variable 9-2 (112 aa).

Positions 1–20 (MNYSPGLVSLILLLLGRTRG) are cleaved as a signal peptide. Residues 21-112 (DSVTQMEGPV…DSAVYFCALS (92 aa)) form the Ig-like domain. Asn-41 carries N-linked (GlcNAc...) asparagine glycosylation. A disulfide bond links Cys-42 and Cys-109.

In terms of assembly, alpha-beta TR is a heterodimer composed of an alpha and beta chain; disulfide-linked. The alpha-beta TR is associated with the transmembrane signaling CD3 coreceptor proteins to form the TR-CD3 (TcR or TCR). The assembly of alpha-beta TR heterodimers with CD3 occurs in the endoplasmic reticulum where a single alpha-beta TR heterodimer associates with one CD3D-CD3E heterodimer, one CD3G-CD3E heterodimer and one CD247 homodimer forming a stable octameric structure. CD3D-CD3E and CD3G-CD3E heterodimers preferentially associate with TR alpha and TR beta chains, respectively. The association of the CD247 homodimer is the last step of TcR assembly in the endoplasmic reticulum and is required for transport to the cell surface.

It localises to the cell membrane. V region of the variable domain of T cell receptor (TR) alpha chain that participates in the antigen recognition. Alpha-beta T cell receptors are antigen specific receptors which are essential to the immune response and are present on the cell surface of T lymphocytes. Recognize peptide-major histocompatibility (MH) (pMH) complexes that are displayed by antigen presenting cells (APC), a prerequisite for efficient T cell adaptive immunity against pathogens. Binding of alpha-beta TR to pMH complex initiates TR-CD3 clustering on the cell surface and intracellular activation of LCK that phosphorylates the ITAM motifs of CD3G, CD3D, CD3E and CD247 enabling the recruitment of ZAP70. In turn ZAP70 phosphorylates LAT, which recruits numerous signaling molecules to form the LAT signalosome. The LAT signalosome propagates signal branching to three major signaling pathways, the calcium, the mitogen-activated protein kinase (MAPK) kinase and the nuclear factor NF-kappa-B (NF-kB) pathways, leading to the mobilization of transcription factors that are critical for gene expression and essential for T cell growth and differentiation. The T cell repertoire is generated in the thymus, by V-(D)-J rearrangement. This repertoire is then shaped by intrathymic selection events to generate a peripheral T cell pool of self-MH restricted, non-autoaggressive T cells. Post-thymic interaction of alpha-beta TR with the pMH complexes shapes TR structural and functional avidity. The polypeptide is T cell receptor alpha variable 9-2 (Homo sapiens (Human)).